The sequence spans 168 residues: Ribosome maturation factor RimM (168 aa).

The PRC barrel domain occupies 93 to 167 (ENEFYQSDLV…YITLNMPEFI (75 aa)).

Belongs to the RimM family. Binds ribosomal protein uS19.

Its subcellular location is the cytoplasm. Functionally, an accessory protein needed during the final step in the assembly of 30S ribosomal subunit, possibly for assembly of the head region. Essential for efficient processing of 16S rRNA. May be needed both before and after RbfA during the maturation of 16S rRNA. It has affinity for free ribosomal 30S subunits but not for 70S ribosomes. The polypeptide is Ribosome maturation factor RimM (Wolbachia sp. subsp. Brugia malayi (strain TRS)).